The sequence spans 1165 residues: Phenyloxazoline synthase MbtB (1165 aa).

In terms of domain architecture, Carrier 1 spans 5–78 (PARSEDIREE…AWAQLVTAGR (74 aa)). Ser-39 bears the O-(pantetheine 4'-phosphoryl)serine mark. A disordered region spans residues 77-100 (GRQDTDSAAPPADSSGDPSGETEP). Positions 97-393 (ETEPFALAPM…SSLLLDVDLV (297 aa)) are condensation/cyclization. The tract at residues 578-973 (SYAQLRDQAL…RVPGVRTAVA (396 aa)) is adenylation. One can recognise a Carrier 2 domain in the interval 1055 to 1131 (AASTPLEGAL…ALAAVLRAAE (77 aa)). An O-(pantetheine 4'-phosphoryl)serine modification is found at Ser-1090.

This sequence belongs to the ATP-dependent AMP-binding enzyme family. MbtB subfamily. Requires pantetheine 4'-phosphate as cofactor. Post-translationally, 4'-phosphopantetheine is transferred from CoA to a specific serine in each of the two carrier protein domains, leading to their activation from apo to holo forms.

The protein operates within siderophore biosynthesis; mycobactin biosynthesis. Functionally, involved in the initial steps of the mycobactin biosynthetic pathway. Putatively couples activated salicylic acid with serine or threonine and cyclizes this precursor to the hydroxyphenyloxazoline ring system present in this class of siderophores. The chain is Phenyloxazoline synthase MbtB (mbtB) from Mycolicibacterium paratuberculosis (strain ATCC BAA-968 / K-10) (Mycobacterium paratuberculosis).